The chain runs to 483 residues: Myocilin (483 aa).

Positions 1–18 (MPTAQLLLLACLLWGLEA) are cleaved as a signal peptide. N-linked (GlcNAc...) asparagine glycosylation is present at asparagine 43. A coiled-coil region spans residues 51–162 (GQAMSAIQDL…SQEVARLRRG (112 aa)). Positions 153-179 (SQEVARLRRGQCPQAHSSSQDVPAGSR) are disordered. Residues 223 to 482 (GCGELVWVGE…MVTYDIRLSK (260 aa)) enclose the Olfactomedin-like domain. An intrachain disulfide couples cysteine 224 to cysteine 412. Aspartate 359, asparagine 407, alanine 408, isoleucine 456, and aspartate 457 together coordinate Ca(2+). The short motif at 481-483 (SKM) is the Microbody targeting signal element.

Homodimer (via N-terminus). Can also form higher oligomers. Interacts with OLFM3, FN1, NRCAM, GLDN and NFASC. Interacts (via N-terminus) with MYL2. Interacts with SFRP1, FRZB, FZD7, FZD10, FZD1 and WIF1; regulates Wnt signaling. Interacts with SNTA1; regulates muscle hypertrophy. Interacts with ERBB2 and ERBB3; activates ERBB2-ERBB3 signaling pathway. Interacts with SNCG; affects its secretion and its aggregation. Post-translationally, N-glycosylated. Palmitoylated. In terms of processing, undergoes a calcium-dependent proteolytic cleavage at Arg-205 by CAPN2 in the endoplasmic reticulum. The result is the production of two fragments, one of 35 kDa containing the C-terminal olfactomedin-like domain, and another of 20 kDa containing the N-terminal leucine zipper-like domain. In terms of tissue distribution, expressed in optic nerve head, ciliary body and retina.

It localises to the secreted. The protein localises to the golgi apparatus. Its subcellular location is the cytoplasmic vesicle. The protein resides in the extracellular space. It is found in the extracellular matrix. It localises to the extracellular exosome. The protein localises to the mitochondrion. Its subcellular location is the mitochondrion intermembrane space. The protein resides in the mitochondrion inner membrane. It is found in the mitochondrion outer membrane. It localises to the rough endoplasmic reticulum. The protein localises to the cell projection. Its subcellular location is the cilium. The protein resides in the endoplasmic reticulum. Functionally, secreted glycoprotein regulating the activation of different signaling pathways in adjacent cells to control different processes including cell adhesion, cell-matrix adhesion, cytoskeleton organization and cell migration. Promotes substrate adhesion, spreading and formation of focal contacts. Negatively regulates cell-matrix adhesion and stress fiber assembly through Rho protein signal transduction. Modulates the organization of actin cytoskeleton by stimulating the formation of stress fibers through interactions with components of Wnt signaling pathways. Promotes cell migration through activation of PTK2 and the downstream phosphatidylinositol 3-kinase signaling. Plays a role in bone formation and promotes osteoblast differentiation in a dose-dependent manner through mitogen-activated protein kinase signaling. Mediates myelination in the peripheral nervous system through ERBB2/ERBB3 signaling. Plays a role as a regulator of muscle hypertrophy through the components of dystrophin-associated protein complex. Involved in positive regulation of mitochondrial depolarization. Plays a role in neurite outgrowth. May participate in the obstruction of fluid outflow in the trabecular meshwork. In Canis lupus familiaris (Dog), this protein is Myocilin (MYOC).